The chain runs to 1000 residues: uncharacterized protein (1000 aa).

Positions 787 to 809 (RQYEKLKRQRAKSETERHQERHG) are enriched in basic and acidic residues. Residues 787 to 812 (RQYEKLKRQRAKSETERHQERHGKLS) are disordered.

This is an uncharacterized protein from Picosynechococcus sp. (strain ATCC 27264 / PCC 7002 / PR-6) (Agmenellum quadruplicatum).